Here is a 309-residue protein sequence, read N- to C-terminus: Porphobilinogen deaminase (309 aa).

An S-(dipyrrolylmethanemethyl)cysteine modification is found at cysteine 243.

This sequence belongs to the HMBS family. As to quaternary structure, monomer. It depends on dipyrromethane as a cofactor.

The catalysed reaction is 4 porphobilinogen + H2O = hydroxymethylbilane + 4 NH4(+). Its pathway is porphyrin-containing compound metabolism; protoporphyrin-IX biosynthesis; coproporphyrinogen-III from 5-aminolevulinate: step 2/4. Its function is as follows. Tetrapolymerization of the monopyrrole PBG into the hydroxymethylbilane pre-uroporphyrinogen in several discrete steps. In Deinococcus geothermalis (strain DSM 11300 / CIP 105573 / AG-3a), this protein is Porphobilinogen deaminase.